Consider the following 428-residue polypeptide: Nematode resistance protein-like HSPRO1 (428 aa).

As to quaternary structure, interacts with SNF4.

The protein resides in the cytoplasm. Positive regulator of basal resistance. This chain is Nematode resistance protein-like HSPRO1 (HSPRO1), found in Arabidopsis thaliana (Mouse-ear cress).